Here is a 388-residue protein sequence, read N- to C-terminus: Phosphopentomutase (388 aa).

6 residues coordinate Mn(2+): D11, D283, H288, D324, H325, and H336.

The protein belongs to the phosphopentomutase family. Requires Mn(2+) as cofactor.

It localises to the cytoplasm. It carries out the reaction 2-deoxy-alpha-D-ribose 1-phosphate = 2-deoxy-D-ribose 5-phosphate. The enzyme catalyses alpha-D-ribose 1-phosphate = D-ribose 5-phosphate. Its pathway is carbohydrate degradation; 2-deoxy-D-ribose 1-phosphate degradation; D-glyceraldehyde 3-phosphate and acetaldehyde from 2-deoxy-alpha-D-ribose 1-phosphate: step 1/2. Its function is as follows. Isomerase that catalyzes the conversion of deoxy-ribose 1-phosphate (dRib-1-P) and ribose 1-phosphate (Rib-1-P) to deoxy-ribose 5-phosphate (dRib-5-P) and ribose 5-phosphate (Rib-5-P), respectively. The sequence is that of Phosphopentomutase from Anaeromyxobacter dehalogenans (strain 2CP-1 / ATCC BAA-258).